Reading from the N-terminus, the 651-residue chain is MPTESRSILARAEETRCRHLSRLLRAGLVFLLCDVLTSCLATPELQNTVIRSSKAHHLQLLFSSRSTPAVKFPLDATLSAPNSFGEQEARSVEAVKQNPWATTTAFADFMKRFNIPQVHGSGIFVDLGRDTEGYREVGGKCPVFGKAIQMHQPAEYSNNFLDDAPTSNDASKKPLPGGFNNPQVYTSGQKFSPIDDSLLQERLGTAGPKTAIGRCALYAYSTIAVNPSTNYTSTYKYPFVYDAVSRKCYVLSVSAQLLKGEKYCSVNGTPSGLTWACFEPVKEKSSARALVYGSAFVAEGNPDAWQSACPNDAVKDALFGKWEDGQCVPFDTKTSVQSDQATNKEECWKRVFANPLVASDAPTTYPEAAQKNWNDFWPVHEQSSPKSGGFGANWANFYLEKESGETICAIFDQVPDCFAPITGAVAYTALGSSTEVNLPQCDSASFIPIEGPCNNCVQVVTECVGNQFDQTSKACCTEPEIIPPVKPPVEPPVEPPVEPPVEPPVEPPVEPPVEPPVEPPVEPPVVEPPTEPSVPEPEPPVVLPPTPGEGGGGGTSGDETVEKEGSGGNTALIAGSVLGMLIILALVGTCVGFYYRKRPLPPTERPTVEASGGREVEGPSDVAVPPDHSWWGEGEHETESLLGSRAVDAEF.

The signal sequence occupies residues 1-41 (MPTESRSILARAEETRCRHLSRLLRAGLVFLLCDVLTSCLA). A propeptide spans 42 to 81 (TPELQNTVIRSSKAHHLQLLFSSRSTPAVKFPLDATLSAP) (removed in mature form). At 42–570 (TPELQNTVIR…VEKEGSGGNT (529 aa)) the chain is on the extracellular side. 7 disulfides stabilise this stretch: Cys-141-Cys-309, Cys-215-Cys-248, Cys-264-Cys-277, Cys-327-Cys-417, Cys-347-Cys-408, Cys-441-Cys-463, and Cys-453-Cys-475. N-linked (GlcNAc...) asparagine glycosylation is present at Asn-230. One copy of the 1; approximate repeat lies at 483–486 (PPVK). A 12 x 4 AA approximate tandem-repeats of P-P-V-E region spans residues 483–531 (PPVKPPVEPPVEPPVEPPVEPPVEPPVEPPVEPPVEPPVEPPVVEPPTE). A compositionally biased stretch (pro residues) spans 483–547 (PPVKPPVEPP…EPPVVLPPTP (65 aa)). Positions 483 to 567 (PPVKPPVEPP…DETVEKEGSG (85 aa)) are disordered. A run of 9 repeats spans residues 487 to 490 (PPVE), 491 to 494 (PPVE), 495 to 498 (PPVE), 499 to 502 (PPVE), 503 to 506 (PPVE), 507 to 510 (PPVE), 511 to 514 (PPVE), 515 to 518 (PPVE), and 519 to 522 (PPVE). One copy of the 11; approximate repeat lies at 523-527 (PPVVE). Residues 528-531 (PPTE) form a 12; approximate repeat. A helical membrane pass occupies residues 571 to 591 (ALIAGSVLGMLIILALVGTCV). The Cytoplasmic portion of the chain corresponds to 592-651 (GFYYRKRPLPPTERPTVEASGGREVEGPSDVAVPPDHSWWGEGEHETESLLGSRAVDAEF). The interval 598–651 (RPLPPTERPTVEASGGREVEGPSDVAVPPDHSWWGEGEHETESLLGSRAVDAEF) is disordered.

It belongs to the apicomplexan parasites AMA1 family. Proteolytically cleaved within its transmembrane domain, releasing a soluble form from the cell surface.

The protein resides in the cell membrane. It localises to the secreted. In terms of biological role, may play a role in host cell invasion. The polypeptide is Apical membrane antigen 1-like protein (Toxoplasma gondii (strain ATCC 50861 / VEG)).